The following is a 455-amino-acid chain: Kynurenine 3-monooxygenase (455 aa).

Belongs to the aromatic-ring hydroxylase family. KMO subfamily. FAD serves as cofactor.

The catalysed reaction is L-kynurenine + NADPH + O2 + H(+) = 3-hydroxy-L-kynurenine + NADP(+) + H2O. The protein operates within cofactor biosynthesis; NAD(+) biosynthesis; quinolinate from L-kynurenine: step 1/3. Catalyzes the hydroxylation of L-kynurenine (L-Kyn) to form 3-hydroxy-L-kynurenine (L-3OHKyn). Required for synthesis of quinolinic acid. In Stenotrophomonas maltophilia (strain K279a), this protein is Kynurenine 3-monooxygenase.